A 702-amino-acid polypeptide reads, in one-letter code: Polyribonucleotide nucleotidyltransferase (702 aa).

Mg(2+) is bound by residues Asp-485 and Asp-491. The region spanning 552–612 (PRTEIICIDP…EGVKKAISII (61 aa)) is the KH domain. One can recognise an S1 motif domain in the interval 622 to 690 (GEIYLGKVTK…NQGRINLSRK (69 aa)).

Belongs to the polyribonucleotide nucleotidyltransferase family. The cofactor is Mg(2+).

The protein resides in the cytoplasm. The enzyme catalyses RNA(n+1) + phosphate = RNA(n) + a ribonucleoside 5'-diphosphate. Functionally, involved in mRNA degradation. Catalyzes the phosphorolysis of single-stranded polyribonucleotides processively in the 3'- to 5'-direction. In Clostridium botulinum (strain Loch Maree / Type A3), this protein is Polyribonucleotide nucleotidyltransferase.